The following is a 434-amino-acid chain: Isocitrate lyase (434 aa).

91–93 (SGW) is a binding site for substrate. Asp157 provides a ligand contact to Mg(2+). Cys195 serves as the catalytic Proton acceptor. Substrate-binding positions include 196–197 (GH), Arg232, 317–321 (NCSPS), and Thr351.

The protein belongs to the isocitrate lyase/PEP mutase superfamily. Isocitrate lyase family. Homotetramer. The cofactor is Mg(2+).

It carries out the reaction D-threo-isocitrate = glyoxylate + succinate. It participates in carbohydrate metabolism; glyoxylate cycle; (S)-malate from isocitrate: step 1/2. Involved in the metabolic adaptation in response to environmental changes. Catalyzes the reversible formation of succinate and glyoxylate from isocitrate, a key step of the glyoxylate cycle, which operates as an anaplerotic route for replenishing the tricarboxylic acid cycle during growth on fatty acid substrates. The polypeptide is Isocitrate lyase (aceA) (Escherichia coli O6:H1 (strain CFT073 / ATCC 700928 / UPEC)).